The primary structure comprises 126 residues: Holo-[acyl-carrier-protein] synthase (126 aa).

Mg(2+) contacts are provided by Asp9 and Glu58.

This sequence belongs to the P-Pant transferase superfamily. AcpS family. It depends on Mg(2+) as a cofactor.

It is found in the cytoplasm. It carries out the reaction apo-[ACP] + CoA = holo-[ACP] + adenosine 3',5'-bisphosphate + H(+). In terms of biological role, transfers the 4'-phosphopantetheine moiety from coenzyme A to a Ser of acyl-carrier-protein. This is Holo-[acyl-carrier-protein] synthase from Enterobacter sp. (strain 638).